The sequence spans 2561 residues: Squalestatin hexaketide synthase (2561 aa).

Residues 1 to 77 (MDVSKEEGQR…NGTTNITPEF (77 aa)) form a disordered region. Residues 20-74 (NETTNGHTNGYTNGHTNGHTNGTTNATTNGTTNGTMNGTTNGTTNRTTNGTTNIT) are compositionally biased toward low complexity. Residues 83 to 503 (QVPVAICGIG…GSNTHIIIDS (421 aa)) form the Ketosynthase family 3 (KS3) domain. Catalysis depends on for beta-ketoacyl synthase activity residues Cys-253, His-390, and His-427. The interval 603–925 (FIFTGQGAQW…LEAIGKLFCF (323 aa)) is malonyl-CoA:ACP transacylase (MAT) domain. Residues 972 to 1101 (HELLGERSLE…GLVTASVVIS (130 aa)) form an N-terminal hotdog fold region. Positions 972-1253 (HELLGERSLE…RGFKCKRTDE (282 aa)) are dehydratase (DH) domain. The PKS/mFAS DH domain maps to 972 to 1257 (HELLGERSLE…CKRTDESFIQ (286 aa)). Catalysis depends on His-1004, which acts as the Proton acceptor; for dehydratase activity. Residues 1112–1257 (TFPRKVDTSR…CKRTDESFIQ (146 aa)) are C-terminal hotdog fold. The active-site Proton donor; for dehydratase activity is the Asp-1174. Positions 1421–1599 (SFFQAAGLNK…GFEGAGTVVL (179 aa)) are methyltransferase (CMet) domain. The segment at 1826–2146 (GMLNTLHWVG…RGVHMGRIVV (321 aa)) is enoyl reductase (ER) (ER) domain. The ketoreductase (KR) domain stretch occupies residues 2170-2343 (STYLLTGGMG…PASVIDIAAI (174 aa)). In terms of domain architecture, Carrier spans 2472–2550 (VLFAQEIAKR…SLGRLATKRL (79 aa)). Ser-2509 carries the O-(pantetheine 4'-phosphoryl)serine modification.

Its pathway is secondary metabolite biosynthesis. Its function is as follows. Highly reducing polyketide synthase (HR-PKS); part of the gene cluster that mediates the biosynthesis of squalestatin S1 (SQS1, also known as zaragozic acid A), a heavily oxidized fungal polyketide that offers potent cholesterol lowering activity by targeting squalene synthase (SS). SQS1 is composed of a 2,8-dioxobicyclic[3.2.1]octane-3,4,5-tricarboxyclic acid core that is connected to two lipophilic polyketide arms. These initial steps feature the priming of an unusual benzoic acid starter unit onto the highly reducing polyketide synthase pks2, followed by oxaloacetate extension and product release to generate a tricarboxylic acid containing product. The phenylalanine ammonia lyase (PAL) M7 and the acyl-CoA ligase M9 are involved in transforming phenylalanine into benzoyl-CoA. The citrate synthase-like protein R3 is involved in connecting the C-alpha-carbons of the hexaketide chain and oxaloacetate to afford the tricarboxylic acid unit. The potential hydrolytic enzymes, M8 and M10, are in close proximity to pks2 and may participate in product release. On the other side, the tetraketide arm is synthesized by a the squalestatin tetraketide synthase pks1 and enzymatically esterified to the core in the last biosynthetic step, by the acetyltransferase M4. The biosynthesis of the tetraketide must involve 3 rounds of chain extension. After the first and second rounds methyl-transfer occurs, and in all rounds of extension the ketoreductase and dehydratase are active. The enoyl reductase and C-MeT of pks1 are not active in the final round of extension. The acetyltransferase M4 appears to have a broad substrate selectivity for its acyl CoA substrate, allowing the in vitro synthesis of novel squalestatins. The biosynthesis of SQS1 requires several oxidative steps likely performed by oxidoreductases M1, R1 and R2. Finally, in support of the identification of the cluster as being responsible for SQS1 production, the cluster contains a gene encoding a putative squalene synthase (SS) R6, suggesting a likely mechanism for self-resistance. In Phoma sp. (strain ATCC 20986 / MF5453), this protein is Squalestatin hexaketide synthase.